The following is a 909-amino-acid chain: E3 ubiquitin-protein ligase HACE1 (909 aa).

Positions 1 to 21 (MERAMEQLNRLTRSLRRARTV) are N-terminal helix important for homodimerization. ANK repeat units lie at residues 23 to 55 (LPED…NSKF), 64 to 93 (VKRS…NPNY), 97 to 126 (SGCT…DVNI), 130 to 159 (EGLT…DVDV), 163 to 192 (MGQT…DINR), 196 to 226 (SGAT…YLPD), and 228 to 253 (NGVT…QYHP). The tract at residues 398-433 (QDQEAPSLSAFEPPGPGSYESLPPGPGDSKPEVLAG) is disordered. An HECT domain is found at 574 to 909 (NCAKLKQGIA…HCGSYGYTMA (336 aa)). Catalysis depends on C876, which acts as the Glycyl thioester intermediate.

Homodimer. The homodimer is autoinhibited and stabilized by its N-terminal helix. Interacts with RAB1 (RAB1A, RAB1B or RAB1C), RAB4 (RAB4A or RAB4B) and RAB11 (RAB11A or RAB11B); in a GTP-dependent manner. Interacts with the 26S proteasomal complex through the 20S core proteasomal subunit. Interacts with RARB. Post-translationally, autoubiquitinated.

The protein resides in the golgi apparatus. Its subcellular location is the golgi stack membrane. It localises to the cytoplasm. The protein localises to the endoplasmic reticulum. It catalyses the reaction S-ubiquitinyl-[E2 ubiquitin-conjugating enzyme]-L-cysteine + [acceptor protein]-L-lysine = [E2 ubiquitin-conjugating enzyme]-L-cysteine + N(6)-ubiquitinyl-[acceptor protein]-L-lysine.. It participates in protein modification; protein ubiquitination. Its activity is regulated as follows. Sterically autoinhibited in its dimeric state. E3 ubiquitin-protein ligase involved in Golgi membrane fusion and regulation of small GTPases. Acts as a regulator of Golgi membrane dynamics during the cell cycle: recruited to Golgi membrane by Rab proteins and regulates postmitotic Golgi membrane fusion. Acts by mediating ubiquitination during mitotic Golgi disassembly, ubiquitination serving as a signal for Golgi reassembly later, after cell division. Specifically binds GTP-bound RAC1, mediating ubiquitination and subsequent degradation of active RAC1, thereby playing a role in host defense against pathogens. May also act as a transcription regulator via its interaction with RARB. This Mus musculus (Mouse) protein is E3 ubiquitin-protein ligase HACE1 (Hace1).